We begin with the raw amino-acid sequence, 472 residues long: ATP synthase subunit beta (472 aa).

160 to 167 (GGAGVGKT) is an ATP binding site.

The protein belongs to the ATPase alpha/beta chains family. F-type ATPases have 2 components, CF(1) - the catalytic core - and CF(0) - the membrane proton channel. CF(1) has five subunits: alpha(3), beta(3), gamma(1), delta(1), epsilon(1). CF(0) has three main subunits: a(1), b(2) and c(9-12). The alpha and beta chains form an alternating ring which encloses part of the gamma chain. CF(1) is attached to CF(0) by a central stalk formed by the gamma and epsilon chains, while a peripheral stalk is formed by the delta and b chains.

The protein localises to the cell membrane. It catalyses the reaction ATP + H2O + 4 H(+)(in) = ADP + phosphate + 5 H(+)(out). In terms of biological role, produces ATP from ADP in the presence of a proton gradient across the membrane. The catalytic sites are hosted primarily by the beta subunits. In Lachnoclostridium phytofermentans (strain ATCC 700394 / DSM 18823 / ISDg) (Clostridium phytofermentans), this protein is ATP synthase subunit beta.